Here is a 543-residue protein sequence, read N- to C-terminus: MSIFTDLNTSRKWQIDQWLSAVNSHIEKIQQYGHSVVNPTPLLADGFEIKTQSPVVWQFPDGHDAPISNFASQQNWLRLLISMSVITETEKYRHLAFCQSEYFLNRFVDENSGLFYWGGHRFINLDTLASEGPESKSMVHELKHHLPYYEFLHQVNPEKTRHFIQGFWNAHVEDWSCLDLGRHGDYARQRDPDVFLHSRHDVVTPANWPELPLTKGLTFVNAGTDLIYAAFVYARHTGDAHAAAWGKHLYRQYVLARNPETGMPVYQFSSPLQRQPVPADDNQTQSWFGDRAQRQFGPEFGAIAREANVLFRDMRPLLIDNPLAMLDILRHQPDAEILTWVIAGLKNYYQYAYDVNSNSLRPMWNNGQDMTDYCFKRDGYYGKAGTVLKPFPLEGDYLLPLVRAWLLSDDDDLHTLIVTMLSRLEKQGIHQSASPFLLLAITELAHAKQSAQWAEYAWQMAEILFKRYFHHGLFVRSEHHRYVRLDDPFPAILLTLIAACRNKWSEVPAVLTQGGYIHGDYRINGESRVIYDTEFIYPEKLIH.

This sequence belongs to the polysaccharide lyase 2 family. Cu cation is required as a cofactor. Requires Mn(2+) as cofactor. The cofactor is Ni(2+).

The protein resides in the cytoplasm. It catalyses the reaction [(1-&gt;4)-alpha-D-galacturonosyl](n) = 4-(4-deoxy-alpha-D-galact-4-enuronosyl)-D-galacturonate + [(1-&gt;4)-alpha-D-galacturonosyl](n-2). Its pathway is glycan metabolism; pectin degradation. Its function is as follows. Catalyzes the formation of unsaturated digalacturonates from polygalacturonate or short oligogalacturonates. The chain is Pectate disaccharide-lyase (pelW) from Dickeya dadantii (strain 3937) (Erwinia chrysanthemi (strain 3937)).